We begin with the raw amino-acid sequence, 31 residues long: Dermaseptin-DI3 (31 aa).

Belongs to the frog skin active peptide (FSAP) family. Dermaseptin subfamily. As to expression, expressed by the skin glands.

The protein resides in the secreted. Its function is as follows. Antibacterial activity against Gram-positive bacteria S.aureus and E.faecalis, and Gram-negative bacteria P.aeruginosa and E.coli. This is Dermaseptin-DI3 from Phyllomedusa distincta (Monkey frog).